We begin with the raw amino-acid sequence, 148 residues long: Large ribosomal subunit protein uL15 (148 aa).

The segment covering methionine 1 to glycine 28 has biased composition (basic residues). The segment at methionine 1 to lysine 43 is disordered. Positions glycine 29–glycine 38 are enriched in gly residues.

Belongs to the universal ribosomal protein uL15 family. Part of the 50S ribosomal subunit.

Its function is as follows. Binds to the 23S rRNA. This chain is Large ribosomal subunit protein uL15, found in Thermococcus kodakarensis (strain ATCC BAA-918 / JCM 12380 / KOD1) (Pyrococcus kodakaraensis (strain KOD1)).